A 340-amino-acid polypeptide reads, in one-letter code: L-threonine 3-dehydrogenase (340 aa).

Cysteine 38 contributes to the Zn(2+) binding site. Catalysis depends on charge relay system residues threonine 40 and histidine 43. Zn(2+) contacts are provided by histidine 63, glutamate 64, cysteine 93, cysteine 96, cysteine 99, and cysteine 107. NAD(+)-binding positions include isoleucine 175, aspartate 195, arginine 200, 262–264 (LGI), and 286–287 (IY).

The protein belongs to the zinc-containing alcohol dehydrogenase family. As to quaternary structure, homotetramer. It depends on Zn(2+) as a cofactor.

The protein localises to the cytoplasm. The catalysed reaction is L-threonine + NAD(+) = (2S)-2-amino-3-oxobutanoate + NADH + H(+). It functions in the pathway amino-acid degradation; L-threonine degradation via oxydo-reductase pathway; glycine from L-threonine: step 1/2. In terms of biological role, catalyzes the NAD(+)-dependent oxidation of L-threonine to 2-amino-3-ketobutyrate. The sequence is that of L-threonine 3-dehydrogenase from Legionella pneumophila (strain Corby).